The sequence spans 689 residues: Protein asunder (689 aa).

Residues 521–550 (NGARLKLSKAKDQYRLLYRELEQLIQLNAT) adopt a coiled-coil conformation. Disordered regions lie at residues 591 to 619 (SPERLEPISSVGASGSSNSNSLLKASKRR) and 669 to 689 (KDAVTTGASITPNVKEESVRS). Low complexity predominate over residues 599–614 (SSVGASGSSNSNSLLK). The short motif at 613 to 619 (LKASKRR) is the Nuclear localization signal (NLS) element.

It belongs to the Integrator subunit 13 family. As to quaternary structure, belongs to the multiprotein complex Integrator, at least composed of IntS1, IntS2, IntS3, IntS4, omd/IntS5, IntS6, defl/IntS7, IntS8, IntS9, IntS10, IntS11, IntS12, asun/IntS13, IntS14 and IntS15. The core complex associates with protein phosphatase 2A subunits mts/PP2A and Pp2A-29B, to form the Integrator-PP2A (INTAC) complex. In terms of processing, phosphorylated.

It localises to the nucleus. The protein resides in the cytoplasm. Its subcellular location is the perinuclear region. In terms of biological role, component of the integrator complex, a multiprotein complex that terminates RNA polymerase II (Pol II) transcription in the promoter-proximal region of genes. The integrator complex provides a quality checkpoint during transcription elongation by driving premature transcription termination of transcripts that are unfavorably configured for transcriptional elongation: the complex terminates transcription by (1) catalyzing dephosphorylation of the C-terminal domain (CTD) of Pol II subunit Polr2A/Rbp1 and Spt5, and (2) degrading the exiting nascent RNA transcript via endonuclease activity. The integrator complex is also involved in the 3'-end processing of the U7 snRNA, and also the spliceosomal snRNAs U1, U2, U4 and U5. The sequence is that of Protein asunder (asun) from Drosophila simulans (Fruit fly).